We begin with the raw amino-acid sequence, 238 residues long: ATP synthase subunit a (238 aa).

A run of 5 helical transmembrane segments spans residues 17–37 (LSNILMITVTCVIVLLIAIIC), 75–95 (FHVLGITILMFVFVANMLGLP), 112–132 (DPIVTLTLAIMVLGLTHYYGI), 172–192 (YGNIFAGEVLLTIIATQLAHI), and 194–214 (IFVGVLAIIPAIIWQAFSLFI).

Belongs to the ATPase A chain family. In terms of assembly, F-type ATPases have 2 components, CF(1) - the catalytic core - and CF(0) - the membrane proton channel. CF(1) has five subunits: alpha(3), beta(3), gamma(1), delta(1), epsilon(1). CF(0) has three main subunits: a(1), b(2) and c(9-12). The alpha and beta chains form an alternating ring which encloses part of the gamma chain. CF(1) is attached to CF(0) by a central stalk formed by the gamma and epsilon chains, while a peripheral stalk is formed by the delta and b chains.

Its subcellular location is the cell membrane. Functionally, key component of the proton channel; it plays a direct role in the translocation of protons across the membrane. The polypeptide is ATP synthase subunit a (Listeria monocytogenes serovar 1/2a (strain ATCC BAA-679 / EGD-e)).